An 816-amino-acid chain; its full sequence is Endo-acting ulvan lyase (816 aa).

The signal sequence occupies residues 1-23 (MGTSVRRISVVLMMLFGTNFCWS).

The protein belongs to the polysaccharide lyase family.

It localises to the cell surface. The protein localises to the periplasm. Its function is as follows. Ulvan lyase involved in ulvan degradation. Ulvan is the main polysaccharide component of the Ulvales (green seaweed) cell wall. It is composed of disaccharide building blocks comprising 3-sulfated rhamnose (Rha3S) linked to D-glucuronic acid (GlcA), L-iduronic acid (IduA), or D-xylose (Xyl). Ulvan lyase catalyzes the endolytic cleavage of the glycosidic bond between Rha3S and the uronic acids GlcA or IduA, producing oligosaccharides that have unsaturated 4-deoxy-L-threo-hex-4-enopyranosiduronic acid (deltaUA) at the non-reducing end. This results eventually in the degradation of the ulvan polysaccharide into deltaUA-Rha3S disaccharides and deltaUA-Rha3S-Xyl-Rha3S tetrasaccharides. The sequence is that of Endo-acting ulvan lyase from Formosa agariphila (strain DSM 15362 / KCTC 12365 / LMG 23005 / KMM 3901 / M-2Alg 35-1).